Here is a 517-residue protein sequence, read N- to C-terminus: Protein disulfide-isomerase A5 (517 aa).

Positions 1–21 are cleaved as a signal peptide; that stretch reads MARAWGLLLAIGVILPTWLSS. 4 disulfides stabilise this stretch: C83–C92, C180–C183, C303–C306, and C424–C427. Thioredoxin domains follow at residues 132–259, 268–382, and 376–504; these read FLKD…NPQP, PWAD…NPEA, and WMQN…TLRE. The short motif at 514 to 517 is the Prevents secretion from ER element; sequence REDL.

This sequence belongs to the protein disulfide isomerase family.

It is found in the endoplasmic reticulum lumen. It catalyses the reaction Catalyzes the rearrangement of -S-S- bonds in proteins.. The protein is Protein disulfide-isomerase A5 (Pdia5) of Rattus norvegicus (Rat).